We begin with the raw amino-acid sequence, 554 residues long: Heterochromatin protein 1-binding protein 3 (554 aa).

An N-acetylalanine modification is found at Ala-2. A Phosphoserine modification is found at Ser-6. Disordered regions lie at residues Leu-30–Pro-136 and Ser-142–Pro-161. The residue at position 51 (Thr-51) is a Phosphothreonine. A compositionally biased stretch (acidic residues) spans Gly-60 to Ser-71. A Glycyl lysine isopeptide (Lys-Gly) (interchain with G-Cter in SUMO2) cross-link involves residue Lys-64. A phosphothreonine mark is found at Glu-72 and Thr-85. Positions Glu-72 to Ala-93 are enriched in polar residues. Over residues Glu-94–Lys-129 the composition is skewed to basic and acidic residues. Residue Lys-97 forms a Glycyl lysine isopeptide (Lys-Gly) (interchain with G-Cter in SUMO2) linkage. The segment covering Ser-142 to Ala-156 has biased composition (polar residues). 3 positions are modified to phosphoserine: Ser-144, Ser-157, and Ser-158. Positions Pro-159–Gln-234 constitute an H15 1 domain. N6-acetyllysine is present on Lys-192. The disordered stretch occupies residues Ser-229 to Glu-254. The span at Pro-238–Gly-248 shows a compositional bias: basic residues. Ser-249 carries the phosphoserine modification. Positions Pro-255–Leu-259 match the PxVxL motif motif. H15 domains lie at Pro-255–Lys-330 and Leu-337–Phe-413. A Glycyl lysine isopeptide (Lys-Gly) (interchain with G-Cter in SUMO2) cross-link involves residue Lys-258. The interval Gly-420–Lys-554 is disordered. Over residues Gly-430 to Glu-451 the composition is skewed to acidic residues. Phosphoserine is present on residues Ser-443, Ser-444, and Ser-447. Positions Ala-464–Gln-475 are enriched in polar residues. 2 stretches are compositionally biased toward basic residues: residues Gly-490 to Arg-511 and Ser-544 to Lys-554.

In terms of assembly, interacts (via PxVxL motif) with CBX5 (via Trp-174).

It localises to the nucleus. It is found in the chromosome. Its function is as follows. Component of heterochromatin that maintains heterochromatin integrity during G1/S progression and regulates the duration of G1 phase to critically influence cell proliferative capacity. May play a role in hypoxia-induced oncogenesis. This Mus musculus (Mouse) protein is Heterochromatin protein 1-binding protein 3 (Hp1bp3).